A 447-amino-acid chain; its full sequence is Ribulose bisphosphate carboxylase large chain (447 aa).

2 residues coordinate substrate: asparagine 89 and threonine 139. The Proton acceptor role is filled by lysine 141. Lysine 143 is a binding site for substrate. The Mg(2+) site is built by lysine 167, aspartate 169, and glutamate 170. Lysine 167 is modified (N6-carboxylysine). Catalysis depends on histidine 260, which acts as the Proton acceptor. Positions 261, 293, and 345 each coordinate substrate.

It belongs to the RuBisCO large chain family. Type I subfamily. As to quaternary structure, heterohexadecamer of 8 large chains and 8 small chains; disulfide-linked. The disulfide link is formed within the large subunit homodimers. It depends on Mg(2+) as a cofactor. The disulfide bond which can form in the large chain dimeric partners within the hexadecamer appears to be associated with oxidative stress and protein turnover.

Its subcellular location is the plastid. The protein localises to the chloroplast. The enzyme catalyses 2 (2R)-3-phosphoglycerate + 2 H(+) = D-ribulose 1,5-bisphosphate + CO2 + H2O. It carries out the reaction D-ribulose 1,5-bisphosphate + O2 = 2-phosphoglycolate + (2R)-3-phosphoglycerate + 2 H(+). Its function is as follows. RuBisCO catalyzes two reactions: the carboxylation of D-ribulose 1,5-bisphosphate, the primary event in carbon dioxide fixation, as well as the oxidative fragmentation of the pentose substrate in the photorespiration process. Both reactions occur simultaneously and in competition at the same active site. This chain is Ribulose bisphosphate carboxylase large chain, found in Ligustrum vulgare (Common privet).